Consider the following 114-residue polypeptide: T cell receptor alpha variable 24 (114 aa).

A signal peptide spans 1-22 (MEKNPLAAPLLILWFHLDCVSS). One can recognise an Ig-like domain in the interval 23–114 (ILNVEQSPQS…EDSATYLCAF (92 aa)). An N-linked (GlcNAc...) asparagine glycan is attached at Asn-42. A disulfide bridge connects residues Cys-45 and Cys-112.

In terms of assembly, alpha-beta TR is a heterodimer composed of an alpha and beta chain; disulfide-linked. The alpha-beta TR is associated with the transmembrane signaling CD3 coreceptor proteins to form the TR-CD3 (TcR or TCR). The assembly of alpha-beta TR heterodimers with CD3 occurs in the endoplasmic reticulum where a single alpha-beta TR heterodimer associates with one CD3D-CD3E heterodimer, one CD3G-CD3E heterodimer and one CD247 homodimer forming a stable octameric structure. CD3D-CD3E and CD3G-CD3E heterodimers preferentially associate with TR alpha and TR beta chains, respectively. The association of the CD247 homodimer is the last step of TcR assembly in the endoplasmic reticulum and is required for transport to the cell surface.

Its subcellular location is the cell membrane. Functionally, v region of the variable domain of T cell receptor (TR) alpha chain that participates in the antigen recognition. Alpha-beta T cell receptors are antigen specific receptors which are essential to the immune response and are present on the cell surface of T lymphocytes. Recognize peptide-major histocompatibility (MH) (pMH) complexes that are displayed by antigen presenting cells (APC), a prerequisite for efficient T cell adaptive immunity against pathogens. Binding of alpha-beta TR to pMH complex initiates TR-CD3 clustering on the cell surface and intracellular activation of LCK that phosphorylates the ITAM motifs of CD3G, CD3D, CD3E and CD247 enabling the recruitment of ZAP70. In turn ZAP70 phosphorylates LAT, which recruits numerous signaling molecules to form the LAT signalosome. The LAT signalosome propagates signal branching to three major signaling pathways, the calcium, the mitogen-activated protein kinase (MAPK) kinase and the nuclear factor NF-kappa-B (NF-kB) pathways, leading to the mobilization of transcription factors that are critical for gene expression and essential for T cell growth and differentiation. The T cell repertoire is generated in the thymus, by V-(D)-J rearrangement. This repertoire is then shaped by intrathymic selection events to generate a peripheral T cell pool of self-MH restricted, non-autoaggressive T cells. Post-thymic interaction of alpha-beta TR with the pMH complexes shapes TR structural and functional avidity. The chain is T cell receptor alpha variable 24 from Homo sapiens (Human).